The primary structure comprises 292 residues: Siderophore triacetylfusarinine C esterase (292 aa).

The triacetylfusarinine C site is built by arginine 97, serine 148, tyrosine 149, serine 174, tryptophan 176, and histidine 267.

The protein belongs to the esterase D family.

It localises to the cytoplasm. The catalysed reaction is triacetylfusarinine C + 3 H2O = 3 N-acetylfusarinine + Fe(3+). Functionally, displays specific triacetylfusarinine C (TAFC) esterase activity but does not hydrolyze fusarinine C, which has the same core structure as TAFC. Hydrolysis optimizes but is not essential for TAFC-mediated iron uptake. Both extra- and intracellular siderophores have been shown to be crucial for the virulence. Subsequent to chelation of iron and uptake, FsC and TAFC are hydrolyzed and the iron is transferred to the metabolism or to the intracellular siderophore ferricrocin (FC) for transport and storage of iron. Hydrolyzes both TAFC and DF-TAFC with equal efficiencies, suggesting that its function might not be restricted to the release of iron from the siderophore but might also include the degradation of the iron-free chelator to protect cells. The chain is Siderophore triacetylfusarinine C esterase from Aspergillus fumigatus (strain ATCC MYA-4609 / CBS 101355 / FGSC A1100 / Af293) (Neosartorya fumigata).